The sequence spans 320 residues: Small ribosomal subunit protein mS35 (320 aa).

Residues 24–63 (SVASPAAPRAGPRTASRSERPMRRKALPPRTEKMDTDQDW) are disordered.

This sequence belongs to the mitochondrion-specific ribosomal protein mS35 family. Component of the mitochondrial ribosome small subunit (28S) which comprises a 12S rRNA and about 30 distinct proteins.

It is found in the mitochondrion. The sequence is that of Small ribosomal subunit protein mS35 from Mus musculus (Mouse).